We begin with the raw amino-acid sequence, 806 residues long: Mitochondrial intermediate peptidase (806 aa).

The N-terminal 29 residues, Met-1–Lys-29, are a transit peptide targeting the mitochondrion. His-581 serves as a coordination point for Zn(2+). Residue Glu-582 is part of the active site. Residues His-585 and His-588 each coordinate Zn(2+).

The protein belongs to the peptidase M3 family. Zn(2+) is required as a cofactor.

The protein resides in the mitochondrion matrix. It carries out the reaction Release of an N-terminal octapeptide as second stage of processing of some proteins imported into the mitochondrion.. Its function is as follows. Cleaves proteins, imported into the mitochondrion, to their mature size. While most mitochondrial precursor proteins are processed to the mature form in one step by mitochondrial processing peptidase (MPP), the sequential cleavage by MIP of an octapeptide after initial processing by MPP is a required step for a subgroup of nuclear-encoded precursor proteins destined for the matrix or the inner membrane. This chain is Mitochondrial intermediate peptidase (OCT1), found in Malassezia globosa (strain ATCC MYA-4612 / CBS 7966) (Dandruff-associated fungus).